Consider the following 487-residue polypeptide: Aspartyl/glutamyl-tRNA(Asn/Gln) amidotransferase subunit B (487 aa).

This sequence belongs to the GatB/GatE family. GatB subfamily. As to quaternary structure, heterotrimer of A, B and C subunits.

The enzyme catalyses L-glutamyl-tRNA(Gln) + L-glutamine + ATP + H2O = L-glutaminyl-tRNA(Gln) + L-glutamate + ADP + phosphate + H(+). It carries out the reaction L-aspartyl-tRNA(Asn) + L-glutamine + ATP + H2O = L-asparaginyl-tRNA(Asn) + L-glutamate + ADP + phosphate + 2 H(+). Allows the formation of correctly charged Asn-tRNA(Asn) or Gln-tRNA(Gln) through the transamidation of misacylated Asp-tRNA(Asn) or Glu-tRNA(Gln) in organisms which lack either or both of asparaginyl-tRNA or glutaminyl-tRNA synthetases. The reaction takes place in the presence of glutamine and ATP through an activated phospho-Asp-tRNA(Asn) or phospho-Glu-tRNA(Gln). The sequence is that of Aspartyl/glutamyl-tRNA(Asn/Gln) amidotransferase subunit B from Leptospira biflexa serovar Patoc (strain Patoc 1 / Ames).